A 218-amino-acid chain; its full sequence is Copper acquisition factor BIM1 (218 aa).

The first 19 residues, 1–19 (MFALKSILVTSLITSTALA), serve as a signal peptide directing secretion. Cu(2+)-binding residues include histidine 20 and histidine 65. 3 N-linked (GlcNAc...) asparagine glycosylation sites follow: asparagine 87, asparagine 91, and asparagine 124. Aspartate 138 serves as a coordination point for Cu(2+). 2 N-linked (GlcNAc...) asparagine glycosylation sites follow: asparagine 158 and asparagine 170. Residues 160-194 (TCTNDASKASNATSTSSGSATATSAAATSSSSGTS) are disordered. Low complexity predominate over residues 165 to 194 (ASKASNATSTSSGSATATSAAATSSSSGTS). Serine 190 is lipidated: GPI-anchor amidated serine. A propeptide spans 191–218 (SGTSGAIKEVVGFGALSLALGIAGLIIL) (removed in mature form).

It belongs to the X325 family. Interacts with the CUF1-dependent copper transporter CTR1. Cu(2+) serves as cofactor.

It is found in the cell membrane. Its function is as follows. Lytic polysaccharide monooxygenase-like protein that has diverged to biological functions other than polysaccharide degradation since it does not perform oxidative cleavage of polysaccharides. Cell surface-bound protein that functions in the copper-accumulation pathway shared by the CUF1-dependent copper transporter CTR1. Involved in maintaining cell wall integrity during copper deficiency. Binds Cu(2+) with an estimated 1:1 stoichiometry and might serve as an extracellular copper ligand. FRE4 and FRE7 metalloreductases probably function together with CTR1 and BIM1 to liberate the Cu(2+) bound to the BIM1 copper-binding site for subsequent import of Cu(+) into the cell by CTR1, via the reduction of BIM1-bound Cu(2+) to Cu(+) to reduce binding affinity for BIM1 but increase affinity for CTR1. Facilitates copper acquisition in the brain of mammalian hosts and acts as a copper-dependent virulence trait in fungal meningitis. While BIM1 plays a critical role in cryptococcal meningitis, at least in part through its role in copper acquisition, it could play additional roles during copper limitation or as a means to invade and colonize host tissues in the brain, by compromising host carbohydrate integrity via its lytic polysaccharide monooxygenase (LPMO) activity, which has still to be determined. This Cryptococcus neoformans var. grubii serotype A (strain H99 / ATCC 208821 / CBS 10515 / FGSC 9487) (Filobasidiella neoformans var. grubii) protein is Copper acquisition factor BIM1.